The chain runs to 384 residues: L-type lectin-like domain-containing protein C4F6.05c (384 aa).

The first 19 residues, 1-19 (MKFCSLFHVLSFCCTLAYA), serve as a signal peptide directing secretion. One can recognise an L-type lectin-like domain in the interval 20–224 (VPKSQFLQLH…DLVALSNLNI (205 aa)). Residues 20–353 (VPKSQFLQLH…AMGNAYSPYN (334 aa)) lie on the Extracellular side of the membrane. A disordered region spans residues 227-251 (PDTSNNENLNPTSNTKQSVGDNTSP). Residues 354–374 (LTNFMVFLLLGAIVSYGIMLV) traverse the membrane as a helical segment. Residues 375 to 384 (RRDRRRHKYL) are Cytoplasmic-facing.

The protein localises to the membrane. The protein resides in the endoplasmic reticulum. Its subcellular location is the golgi apparatus. The chain is L-type lectin-like domain-containing protein C4F6.05c from Schizosaccharomyces pombe (strain 972 / ATCC 24843) (Fission yeast).